Consider the following 89-residue polypeptide: Small ribosomal subunit protein uS15 (89 aa).

The span at 1 to 21 (MSLHQERKSELVSKFRTHESD) shows a compositional bias: basic and acidic residues. The tract at residues 1–25 (MSLHQERKSELVSKFRTHESDTGSP) is disordered.

The protein belongs to the universal ribosomal protein uS15 family. In terms of assembly, part of the 30S ribosomal subunit. Forms a bridge to the 50S subunit in the 70S ribosome, contacting the 23S rRNA.

One of the primary rRNA binding proteins, it binds directly to 16S rRNA where it helps nucleate assembly of the platform of the 30S subunit by binding and bridging several RNA helices of the 16S rRNA. In terms of biological role, forms an intersubunit bridge (bridge B4) with the 23S rRNA of the 50S subunit in the ribosome. The protein is Small ribosomal subunit protein uS15 of Myxococcus xanthus (strain DK1622).